The chain runs to 216 residues: MVVIGEKFPEVEVKTTHGVIKLPDHFTKQGKWFILFSHPADFTPVCTTEFYGMQKRLEEFRKLGVEPIGLSVDQVFAHIKWMEWIKENLGVEIEFPIIADDRGELAEKLGMIPSGATITARAVFIVDDKGIIRAIVYYPAEVGRDWDEILRLVKALKISTENGVALPHKWPNNELIGDKVIIPPASTVEEKKQREEAKAKGEIECYDWWFCYKKLK.

The Thioredoxin domain maps to 2–158; sequence VVIGEKFPEV…ILRLVKALKI (157 aa). Cysteine 46 (cysteine sulfenic acid (-SOH) intermediate) is an active-site residue. Arginine 121 is a binding site for substrate. Residues cysteine 205 and cysteine 211 are joined by a disulfide bond.

The protein belongs to the peroxiredoxin family. Prx6 subfamily. In terms of assembly, homodecamer. Pentamer of dimers that assemble into a ring structure.

The protein resides in the cytoplasm. It catalyses the reaction a hydroperoxide + [thioredoxin]-dithiol = an alcohol + [thioredoxin]-disulfide + H2O. Functionally, thiol-specific peroxidase that catalyzes the reduction of hydrogen peroxide and organic hydroperoxides to water and alcohols, respectively. Plays a role in cell protection against oxidative stress by detoxifying peroxides. The chain is Peroxiredoxin from Pyrococcus abyssi (strain GE5 / Orsay).